The following is a 566-amino-acid chain: Type 3 secretion system secretin (566 aa).

Positions 1–22 (MKKFNIKSLTLLIVLLPLIVNA) are cleaved as a signal peptide.

It belongs to the bacterial secretin family. T3SS SctC subfamily. In terms of assembly, the core secretion machinery of the T3SS is composed of approximately 20 different proteins, including cytoplasmic components, a base, an export apparatus and a needle. This subunit is part of the base, which anchors the injectisome in the bacterial cell envelope. Forms a stable homooligomeric complex.

The protein localises to the cell outer membrane. Its function is as follows. Component of the type III secretion system (T3SS), also called injectisome, which is used to inject bacterial effector proteins into eukaryotic host cells. Forms a ring-shaped multimeric structure with an apparent central pore in the outer membrane. The protein is Type 3 secretion system secretin of Shigella sonnei.